The primary structure comprises 361 residues: Cilia- and flagella-associated protein 263 (361 aa).

The protein belongs to the CFAP263 family. Forms a complex with CFAP184; the interaction is required for functional activity in cilia.

The protein resides in the cell projection. Its subcellular location is the cilium. Functionally, in complex with CFAP263, acts as a regulator of ciliary beating that connects radial spoke 3 (RS3) to the inner dynein arm (IDA) and the nexin-dynein regulatory complex (N-DRC). The complex is positioned parallel to N-DRC and forms a connection between the arch at the base of RS3, the IDA tail and N-DRC. The chain is Cilia- and flagella-associated protein 263 (CFAP263) from Tetrahymena thermophila (strain SB210).